We begin with the raw amino-acid sequence, 419 residues long: MDVKAPRGTNDILPPVSLKWQYIEDTARRIFQMYNYKEIRTPIFEYTELFQRGIGETTDIVEKEMYTFEDKGGRSITLRPEGTASVVRAFLEHKIYGQVQPTKYFYIGPMFRYERPQAGRFRQFHQLGVEAFGSNDPALDAEVIALGLDILKRLGLTDVEVFINSIGCPECRARYSDELKQYLESHQDRLCKDCKARLNKNPLRILDCKNEECSLVIKNAPKILDYLCDNCRVHFEDVQEYLDLLGIKYRVDPTLVRGLDYYTNTAFEIKFKELGAQDAIFGGGRYNGLTEEIGNKSIPGIGFAVGIERLILALDKKGIKLPVNDSIDVYLVTIGERAKRAAFNYTYLLRESGITAEIDYLGRSIKSQMKSADRTGASYTIIIGDSELDSGKATVKNMRTGEQVEIMLANLIEEMQKLV.

Belongs to the class-II aminoacyl-tRNA synthetase family. In terms of assembly, homodimer.

It localises to the cytoplasm. It catalyses the reaction tRNA(His) + L-histidine + ATP = L-histidyl-tRNA(His) + AMP + diphosphate + H(+). The chain is Histidine--tRNA ligase from Halothermothrix orenii (strain H 168 / OCM 544 / DSM 9562).